Reading from the N-terminus, the 375-residue chain is Succinyl-diaminopimelate desuccinylase (375 aa).

His-66 is a binding site for Zn(2+). Asp-68 is an active-site residue. Asp-99 is a Zn(2+) binding site. The Proton acceptor role is filled by Glu-133. Zn(2+) is bound by residues Glu-134, Glu-162, and His-348.

It belongs to the peptidase M20A family. DapE subfamily. In terms of assembly, homodimer. Zn(2+) serves as cofactor. Co(2+) is required as a cofactor.

It catalyses the reaction N-succinyl-(2S,6S)-2,6-diaminopimelate + H2O = (2S,6S)-2,6-diaminopimelate + succinate. It functions in the pathway amino-acid biosynthesis; L-lysine biosynthesis via DAP pathway; LL-2,6-diaminopimelate from (S)-tetrahydrodipicolinate (succinylase route): step 3/3. Its function is as follows. Catalyzes the hydrolysis of N-succinyl-L,L-diaminopimelic acid (SDAP), forming succinate and LL-2,6-diaminopimelate (DAP), an intermediate involved in the bacterial biosynthesis of lysine and meso-diaminopimelic acid, an essential component of bacterial cell walls. The sequence is that of Succinyl-diaminopimelate desuccinylase from Shigella flexneri serotype 5b (strain 8401).